The chain runs to 852 residues: Bifunctional uridylyltransferase/uridylyl-removing enzyme (852 aa).

The tract at residues Met-1–Ile-318 is uridylyltransferase. The segment at Asp-319 to Phe-672 is uridylyl-removing. The 123-residue stretch at Val-436–Leu-558 folds into the HD domain. ACT domains lie at Gln-673–Arg-757 and Ser-785–Ala-852.

This sequence belongs to the GlnD family. The cofactor is Mg(2+).

It carries out the reaction [protein-PII]-L-tyrosine + UTP = [protein-PII]-uridylyl-L-tyrosine + diphosphate. It catalyses the reaction [protein-PII]-uridylyl-L-tyrosine + H2O = [protein-PII]-L-tyrosine + UMP + H(+). Uridylyltransferase (UTase) activity is inhibited by glutamine, while glutamine activates uridylyl-removing (UR) activity. In terms of biological role, modifies, by uridylylation and deuridylylation, the PII regulatory proteins (GlnB and homologs), in response to the nitrogen status of the cell that GlnD senses through the glutamine level. Under low glutamine levels, catalyzes the conversion of the PII proteins and UTP to PII-UMP and PPi, while under higher glutamine levels, GlnD hydrolyzes PII-UMP to PII and UMP (deuridylylation). Thus, controls uridylylation state and activity of the PII proteins, and plays an important role in the regulation of nitrogen assimilation and metabolism. In Neisseria gonorrhoeae (strain NCCP11945), this protein is Bifunctional uridylyltransferase/uridylyl-removing enzyme.